We begin with the raw amino-acid sequence, 259 residues long: Tryptophan synthase alpha chain (259 aa).

Residues E35 and D46 each act as proton acceptor in the active site.

The protein belongs to the TrpA family. Tetramer of two alpha and two beta chains.

It catalyses the reaction (1S,2R)-1-C-(indol-3-yl)glycerol 3-phosphate + L-serine = D-glyceraldehyde 3-phosphate + L-tryptophan + H2O. Its pathway is amino-acid biosynthesis; L-tryptophan biosynthesis; L-tryptophan from chorismate: step 5/5. Functionally, the alpha subunit is responsible for the aldol cleavage of indoleglycerol phosphate to indole and glyceraldehyde 3-phosphate. The polypeptide is Tryptophan synthase alpha chain (Methanococcus maripaludis (strain C7 / ATCC BAA-1331)).